A 156-amino-acid polypeptide reads, in one-letter code: ATP synthase subunit b (156 aa).

A helical membrane pass occupies residues 11–31 (AIAFVLFVLFCMKYIWPPIMA).

Belongs to the ATPase B chain family. F-type ATPases have 2 components, F(1) - the catalytic core - and F(0) - the membrane proton channel. F(1) has five subunits: alpha(3), beta(3), gamma(1), delta(1), epsilon(1). F(0) has three main subunits: a(1), b(2) and c(10-14). The alpha and beta chains form an alternating ring which encloses part of the gamma chain. F(1) is attached to F(0) by a central stalk formed by the gamma and epsilon chains, while a peripheral stalk is formed by the delta and b chains.

The protein localises to the cell inner membrane. F(1)F(0) ATP synthase produces ATP from ADP in the presence of a proton or sodium gradient. F-type ATPases consist of two structural domains, F(1) containing the extramembraneous catalytic core and F(0) containing the membrane proton channel, linked together by a central stalk and a peripheral stalk. During catalysis, ATP synthesis in the catalytic domain of F(1) is coupled via a rotary mechanism of the central stalk subunits to proton translocation. Its function is as follows. Component of the F(0) channel, it forms part of the peripheral stalk, linking F(1) to F(0). In Yersinia enterocolitica serotype O:8 / biotype 1B (strain NCTC 13174 / 8081), this protein is ATP synthase subunit b.